Here is a 67-residue protein sequence, read N- to C-terminus: Large ribosomal subunit protein uL29 (67 aa).

This sequence belongs to the universal ribosomal protein uL29 family.

This is Large ribosomal subunit protein uL29 from Rhizorhabdus wittichii (strain DSM 6014 / CCUG 31198 / JCM 15750 / NBRC 105917 / EY 4224 / RW1) (Sphingomonas wittichii).